Here is a 490-residue protein sequence, read N- to C-terminus: Cytochrome P450 71B29 (490 aa).

The helical transmembrane segment at 1–21 threads the bilayer; that stretch reads MAIILCFLILLPLILIFLKKL. Residue Cys440 participates in heme binding.

The protein belongs to the cytochrome P450 family. It depends on heme as a cofactor.

It localises to the membrane. The chain is Cytochrome P450 71B29 (CYP71B29) from Arabidopsis thaliana (Mouse-ear cress).